The chain runs to 128 residues: Large-conductance mechanosensitive channel (128 aa).

2 consecutive transmembrane segments (helical) span residues 11-31 (FALK…AAFG) and 70-90 (GAFI…FIFV).

It belongs to the MscL family. As to quaternary structure, homopentamer.

The protein resides in the cell membrane. Its function is as follows. Channel that opens in response to stretch forces in the membrane lipid bilayer. May participate in the regulation of osmotic pressure changes within the cell. The polypeptide is Large-conductance mechanosensitive channel (Listeria monocytogenes serotype 4a (strain HCC23)).